A 347-amino-acid chain; its full sequence is Anthranilate phosphoribosyltransferase (347 aa).

5-phospho-alpha-D-ribose 1-diphosphate contacts are provided by residues Gly86, 89-90 (GD), Thr94, 96-99 (NIST), 114-122 (KHGNRSVSS), and Ser126. An anthranilate-binding site is contributed by Gly86. Residue Ser98 coordinates Mg(2+). Asn117 contributes to the anthranilate binding site. Residue Arg172 participates in anthranilate binding. The Mg(2+) site is built by Asp230 and Glu231.

This sequence belongs to the anthranilate phosphoribosyltransferase family. As to quaternary structure, homodimer. The cofactor is Mg(2+).

It catalyses the reaction N-(5-phospho-beta-D-ribosyl)anthranilate + diphosphate = 5-phospho-alpha-D-ribose 1-diphosphate + anthranilate. The protein operates within amino-acid biosynthesis; L-tryptophan biosynthesis; L-tryptophan from chorismate: step 2/5. Functionally, catalyzes the transfer of the phosphoribosyl group of 5-phosphorylribose-1-pyrophosphate (PRPP) to anthranilate to yield N-(5'-phosphoribosyl)-anthranilate (PRA). In Shewanella frigidimarina (strain NCIMB 400), this protein is Anthranilate phosphoribosyltransferase.